We begin with the raw amino-acid sequence, 1952 residues long: Protein ROS1A (1952 aa).

4 disordered regions span residues 72 to 157, 693 to 778, 1302 to 1334, and 1367 to 1398; these read EVVG…CRSE, IIRP…ESTS, HGTS…DDNV, and LIEN…AGKK. 2 stretches are compositionally biased toward basic residues: residues 90–102 and 130–139; these read PARK…HRPK and GKRKYVRKKT. 2 stretches are compositionally biased toward basic and acidic residues: residues 709–720 and 727–747; these read PRTDNHQVKVSE and LPEK…EKPK. Residues 769–778 show a composition bias toward polar residues; the sequence is TNPLQNESTS. The segment covering 1388 to 1398 has biased composition (basic residues); sequence AKRPRVGAGKK. The [4Fe-4S] cluster site is built by Cys1582, Cys1589, Cys1592, and Cys1598.

The protein belongs to the DNA glycosylase family. DEMETER subfamily. It depends on [4Fe-4S] cluster as a cofactor. Expressed in roots, leaf blades, leaf sheaths, apical and lateral shoot meristems, inflorescence meristems, lodicules, pollen grains, ovules and seeds. Expressed in vascular tissues of roots and leaves, pollen grains, pericarp, aleurone, and starchy endosperm.

The protein localises to the nucleus. Bifunctional DNA glycosylase/lyase, which excises 5-methylcytosine (5-meC) and 5-hydroxymethylcytosine (5-hmeC), leaving an apyrimidinic (AP) site that is subsequently incised by the lyase activity. DNA demethylase that is indispensable in both male and female gametophyte development. Involved in the regulation of DNA methylation in the promoters of RISBZ1/BZIP58 and DOF3/RPBF, two transcription factors that functions synergistically to positively regulate genes that are key players in the development of aleurone layers. Active DNA demethylation carried out by ROS1A in rice endosperms may restrict the number of aleurone cell layers. The polypeptide is Protein ROS1A (Oryza sativa subsp. japonica (Rice)).